We begin with the raw amino-acid sequence, 62 residues long: UPF0434 protein BP2767 (62 aa).

The protein belongs to the UPF0434 family.

This chain is UPF0434 protein BP2767, found in Bordetella pertussis (strain Tohama I / ATCC BAA-589 / NCTC 13251).